Consider the following 199-residue polypeptide: Peroxiredoxin-1 (199 aa).

Residue S2 is modified to N-acetylserine. Residues A6 to F165 form the Thioredoxin domain. K7 is modified (N6-acetyllysine; alternate). K7 is covalently cross-linked (Glycyl lysine isopeptide (Lys-Gly) (interchain with G-Cter in SUMO2); alternate). N6-acetyllysine is present on residues K16 and K27. Residue S32 is modified to Phosphoserine. An N6-acetyllysine; alternate modification is found at K35. N6-succinyllysine; alternate is present on K35. C52 acts as the Cysteine sulfenic acid (-SOH) intermediate in catalysis. T90 bears the Phosphothreonine mark. A Glycyl lysine isopeptide (Lys-Gly) (interchain with G-Cter in SUMO2) cross-link involves residue K120. K136 bears the N6-acetyllysine mark. Residues G176–K199 form a disordered region. Residues I184–K199 show a composition bias toward basic and acidic residues. K185 is covalently cross-linked (Glycyl lysine isopeptide (Lys-Gly) (interchain with G-Cter in SUMO1)). K197 carries the post-translational modification N6-acetyllysine.

It belongs to the peroxiredoxin family. AhpC/Prx1 subfamily. In terms of assembly, homodimer; disulfide-linked, upon oxidation. 5 homodimers assemble to form a ring-like decamer. Interacts with GDPD5; forms a mixed-disulfide with GDPD5. Interacts with SESN1 and SESN2. Interacts with FAM107A. Phosphorylated on Thr-90 during the M-phase, which leads to a decrease in enzymatic activity. Post-translationally, acetylation increases reducing activity and resistance to superoxidation. Deacetylated by HDAC6 which decreases reducing activity. In terms of tissue distribution, detected in heart and skeletal muscle (at protein level).

It localises to the cytoplasm. It catalyses the reaction a hydroperoxide + [thioredoxin]-dithiol = an alcohol + [thioredoxin]-disulfide + H2O. In terms of biological role, thiol-specific peroxidase that catalyzes the reduction of hydrogen peroxide and organic hydroperoxides to water and alcohols, respectively. Plays a role in cell protection against oxidative stress by detoxifying peroxides and as sensor of hydrogen peroxide-mediated signaling events. Might participate in the signaling cascades of growth factors and tumor necrosis factor-alpha by regulating the intracellular concentrations of H(2)O(2). Reduces an intramolecular disulfide bond in GDPD5 that gates the ability to GDPD5 to drive postmitotic motor neuron differentiation. In Myotis lucifugus (Little brown bat), this protein is Peroxiredoxin-1 (PRDX1).